The chain runs to 181 residues: MKQLLDFLPLVIFFAVYKFFDIYIASGALIAATALQLIVTYALYKKLEKMHLITFAMVTVFGTLTLVFHDDSFIKWKVTIIYSLFAIALGVSQLLNKSILKSMLGKEMQVEDKIWARVTWYWVVFFASCGLVNIYVAFSLPLETWVNFKVFGLTALTLINTVLTVFYLYKHLPEDQRKELK.

Transmembrane regions (helical) follow at residues 10–30 (LVIF…GALI), 50–70 (MHLI…VFHD), 80–100 (IIYS…KSIL), 118–138 (VTWY…YVAF), and 148–168 (FKVF…VFYL).

It belongs to the YciB family.

It is found in the cell inner membrane. In terms of biological role, plays a role in cell envelope biogenesis, maintenance of cell envelope integrity and membrane homeostasis. In Shewanella baltica (strain OS223), this protein is Inner membrane-spanning protein YciB.